Consider the following 387-residue polypeptide: Putative odorant receptor 19b (387 aa).

The Cytoplasmic segment spans residues methionine 1–tyrosine 40. Residues serine 41 to leucine 61 traverse the membrane as a helical segment. At glutamine 62 to glutamate 71 the chain is on the extracellular side. The chain crosses the membrane as a helical span at residues serine 72 to methionine 92. The Cytoplasmic segment spans residues arginine 93–glutamate 127. Residues phenylalanine 128–isoleucine 148 form a helical membrane-spanning segment. The Extracellular segment spans residues serine 149 to serine 171. Residues alanine 172 to leucine 192 form a helical membrane-spanning segment. Over asparagine 193–serine 254 the chain is Cytoplasmic. The helical transmembrane segment at leucine 255–tyrosine 275 threads the bilayer. Over phenylalanine 276–methionine 285 the chain is Extracellular. Residues arginine 286–tyrosine 306 traverse the membrane as a helical segment. Residues threonine 307–arginine 336 are Cytoplasmic-facing. A helical membrane pass occupies residues leucine 337–valine 357. Topologically, residues proline 358–glutamate 387 are extracellular.

This sequence belongs to the insect chemoreceptor superfamily. Heteromeric odorant receptor channel (TC 1.A.69) family. Or2a subfamily. In terms of assembly, interacts with Orco. Complexes exist early in the endomembrane system in olfactory sensory neurons (OSNs), coupling these complexes to the conserved ciliary trafficking pathway.

Its subcellular location is the cell membrane. In terms of biological role, odorant receptor which mediates acceptance or avoidance behavior, depending on its substrates. The odorant receptor repertoire encodes a large collection of odor stimuli that vary widely in identity, intensity, and duration. May form a complex with Orco to form odorant-sensing units, providing sensitive and prolonged odorant signaling and calcium permeability. This Drosophila melanogaster (Fruit fly) protein is Putative odorant receptor 19b.